An 819-amino-acid polypeptide reads, in one-letter code: FYN-binding protein 1 (819 aa).

Over residues 1-45 (MAKFNTGSNPTEEAATSSRPFKVAGQSSPSGIQSRKNLFDNQGNA) the composition is skewed to polar residues. Residues 1–490 (MAKFNTGSNP…REKKEQELKK (490 aa)) are disordered. Lysine 3 carries the N6-acetyllysine modification. Phosphoserine is present on residues serine 28 and serine 46. Residues 69 to 79 (TYEEKPEKEPK) are compositionally biased toward basic and acidic residues. Pro residues predominate over residues 150-160 (GPKPGPAPPVP). Serine 222 is subject to Phosphoserine. 2 stretches are compositionally biased toward basic and acidic residues: residues 237 to 248 (PPKEDPEDKDHG) and 273 to 285 (NFEE…KTDL). Residue serine 318 is modified to Phosphoserine. Pro residues-rich tracts occupy residues 342-351 (GPPPPKPNRP) and 380-412 (LPPP…PRNI). Acidic residues predominate over residues 439–453 (LEEEQESEGETYEDI). Serine 445 bears the Phosphoserine mark. The stretch at 448-495 (ETYEDIDSSKERDKKREKEEKKRLELERKEQKEREKKEQELKKKFKLT) forms a coiled coil. Over residues 454-489 (DSSKERDKKREKEEKKRLELERKEQKEREKKEQELK) the composition is skewed to basic and acidic residues. The Nuclear localization signal signature appears at 479–493 (KEREKKEQELKKKFK). The 62-residue stretch at 499–560 (QVIHHAKACC…KTTAVEIDYD (62 aa)) folds into the SH3 1 domain. Position 559 is a phosphotyrosine (tyrosine 559). Residues serine 561 and serine 568 each carry the phosphoserine modification. The SH2-binding; to LCP2 signature appears at 584–587 (YDDV). 2 disordered regions span residues 589–635 (EQDA…DEKT) and 649–728 (KDDR…EKEE). The span at 610-626 (TDDEIYDGIEEEDDDDG) shows a compositional bias: acidic residues. The SH2-binding; to FYN motif lies at 615–618 (YDGI). The span at 649–664 (KDDRKKSIREKPKVSE) shows a compositional bias: basic and acidic residues. The span at 668–677 (NEGSSLPSQH) shows a compositional bias: polar residues. Positions 682–692 (VGEEVYDDVDA) are enriched in acidic residues. At tyrosine 687 the chain carries Phosphotyrosine. The short motif at 710–736 (RAKTEEKDPKKLKKQEKEEKDLRKKFK) is the Nuclear localization signal element. A compositionally biased stretch (basic and acidic residues) spans 711 to 728 (AKTEEKDPKKLKKQEKEE). Residues 736 to 804 (KYDGEIRVLY…LRSYLVDNDG (69 aa)) enclose the SH3 2 domain.

As to quaternary structure, part of a complex consisting of SKAP2, FYB1 and PTPNS1. Part of a complex consisting of SKAP2, FYB1 and PIRB. Part of a complex consisting of SKAP1, FYB1 and CLNK. Interacts with CLNK (via its SH2 domain); this interaction allows SKAP1 and FYB1 to recruit FYN to the complex, thus promoting the phosphorylation of CLNK by FYN. Interacts with FYN. Interacts with LCP2. Interacts with SKAP1. Interacts with SKAP2. Interacts with FASLG. Interacts with EVL. Interacts with TMEM47. Interacts with LCK. Post-translationally, T-cell receptor ligation leads to increased tyrosine phosphorylation. As to expression, expressed in hematopoietic tissues such as myeloid and T-cells, spleen and thymus. Not expressed in B-cells, nor in non-lymphoid tissues. FYB-130 is preferentially expressed in mature T-cells compared to FYB-120, whereas thymocytes showed a greater relative amount of FYB-120. Expressed in podocytes.

It is found in the cytoplasm. It localises to the nucleus. The protein localises to the cell junction. In terms of biological role, acts as an adapter protein of the FYN and LCP2 signaling cascades in T-cells. May play a role in linking T-cell signaling to remodeling of the actin cytoskeleton. Modulates the expression of IL2. Involved in platelet activation. Prevents the degradation of SKAP1 and SKAP2. May be involved in high affinity immunoglobulin epsilon receptor signaling in mast cells. In Mus musculus (Mouse), this protein is FYN-binding protein 1 (Fyb1).